Here is an 881-residue protein sequence, read N- to C-terminus: DNA mismatch repair protein MutS (881 aa).

605 to 612 (GPNMSGKS) lines the ATP pocket.

This sequence belongs to the DNA mismatch repair MutS family.

Functionally, this protein is involved in the repair of mismatches in DNA. It is possible that it carries out the mismatch recognition step. This protein has a weak ATPase activity. This Limosilactobacillus reuteri subsp. reuteri (strain JCM 1112) (Lactobacillus reuteri) protein is DNA mismatch repair protein MutS.